A 299-amino-acid chain; its full sequence is S-fimbrial protein subunit SfaH (299 aa).

Belongs to the fimbrial protein family.

It is found in the fimbrium. Functionally, fimbriae (also called pili), polar filaments radiating from the surface of the bacterium to a length of 0.5-1.5 micrometers and numbering 100-300 per cell, enable bacteria to colonize the epithelium of specific host organs. In terms of biological role, a minor fimbrial subunit. This protein is necessary for full expression of S-specific binding. S-fimbrial adhesins enable pathogenic E.coli causing urinary-tract infections or newborn meningitis to attach to glycoproteins terminating with alpha-sialic acid-(2-3)-beta-Gal. The polypeptide is S-fimbrial protein subunit SfaH (sfaH) (Escherichia coli O6:K15:H31 (strain 536 / UPEC)).